The chain runs to 265 residues: Type III pantothenate kinase (265 aa).

An ATP-binding site is contributed by 9 to 16 (DAGNSRIK). Substrate-binding positions include tyrosine 96 and 103–106 (GSDR). The active-site Proton acceptor is aspartate 105. Position 129 (threonine 129) interacts with ATP. Residue threonine 189 participates in substrate binding.

Belongs to the type III pantothenate kinase family. As to quaternary structure, homodimer. It depends on NH4(+) as a cofactor. K(+) serves as cofactor.

The protein localises to the cytoplasm. It catalyses the reaction (R)-pantothenate + ATP = (R)-4'-phosphopantothenate + ADP + H(+). It participates in cofactor biosynthesis; coenzyme A biosynthesis; CoA from (R)-pantothenate: step 1/5. Functionally, catalyzes the phosphorylation of pantothenate (Pan), the first step in CoA biosynthesis. The protein is Type III pantothenate kinase of Burkholderia orbicola (strain AU 1054).